Here is a 138-residue protein sequence, read N- to C-terminus: MLTDPIADMLTRIRNATRVYKESTEVPASRFKEEILKILAREGFIKGYERVEVDGKPYLRIHLKYGPRRQGPDPRPEQVIKHIRRISRPGRRVYVGVKEIPRVRRGLGIAILSTPKGVLTDREARKLGVGGELICEVW.

This sequence belongs to the universal ribosomal protein uS8 family. Part of the 30S ribosomal subunit. Contacts proteins S5 and S12.

In terms of biological role, one of the primary rRNA binding proteins, it binds directly to 16S rRNA central domain where it helps coordinate assembly of the platform of the 30S subunit. This Thermus aquaticus protein is Small ribosomal subunit protein uS8.